Reading from the N-terminus, the 556-residue chain is Arginine--tRNA ligase (556 aa).

The 'HIGH' region motif lies at 132–142 (ANPTGDLHLGH).

This sequence belongs to the class-I aminoacyl-tRNA synthetase family. Monomer.

The protein localises to the cytoplasm. The catalysed reaction is tRNA(Arg) + L-arginine + ATP = L-arginyl-tRNA(Arg) + AMP + diphosphate. This chain is Arginine--tRNA ligase, found in Bacillus velezensis (strain DSM 23117 / BGSC 10A6 / LMG 26770 / FZB42) (Bacillus amyloliquefaciens subsp. plantarum).